Reading from the N-terminus, the 522-residue chain is Probable cytosolic Fe-S cluster assembly factor narfl (522 aa).

Residues cysteine 26, cysteine 73, cysteine 76, cysteine 79, cysteine 205, cysteine 281, cysteine 439, and cysteine 443 each coordinate [4Fe-4S] cluster.

It belongs to the NARF family.

Its function is as follows. Component of the cytosolic iron-sulfur (Fe/S) protein assembly machinery. Required for maturation of extramitochondrial Fe/S proteins. This is Probable cytosolic Fe-S cluster assembly factor narfl (narfl) from Dictyostelium discoideum (Social amoeba).